A 251-amino-acid polypeptide reads, in one-letter code: Probable ATP-dependent transporter ycf16 (251 aa).

One can recognise an ABC transporter domain in the interval 8–250; the sequence is LEIKNLKACI…ELESKGYEWL (243 aa). An ATP-binding site is contributed by 40–47; sequence GPNGSGKS.

This sequence belongs to the ABC transporter superfamily. Ycf16 family.

It localises to the plastid. It is found in the chloroplast. The protein is Probable ATP-dependent transporter ycf16 (ycf16) of Trieres chinensis (Marine centric diatom).